A 223-amino-acid polypeptide reads, in one-letter code: Endonuclease V (223 aa).

Positions 35 and 103 each coordinate Mg(2+).

It belongs to the endonuclease V family. It depends on Mg(2+) as a cofactor.

Its subcellular location is the cytoplasm. It catalyses the reaction Endonucleolytic cleavage at apurinic or apyrimidinic sites to products with a 5'-phosphate.. Functionally, DNA repair enzyme involved in the repair of deaminated bases. Selectively cleaves double-stranded DNA at the second phosphodiester bond 3' to a deoxyinosine leaving behind the intact lesion on the nicked DNA. The chain is Endonuclease V from Escherichia coli O139:H28 (strain E24377A / ETEC).